A 197-amino-acid polypeptide reads, in one-letter code: Phosphoheptose isomerase (197 aa).

Residues 36-197 (MVNALLNEGK…IDSQLFGSEE (162 aa)) enclose the SIS domain. Position 51–53 (51–53 (NGG)) interacts with substrate. Positions 60 and 64 each coordinate Zn(2+). Substrate contacts are provided by residues E64, 93-94 (ND), 119-121 (STS), S124, and Q174. Zn(2+) is bound by residues Q174 and H182.

It belongs to the SIS family. GmhA subfamily. Homotetramer. Zn(2+) serves as cofactor.

It localises to the cytoplasm. It catalyses the reaction 2 D-sedoheptulose 7-phosphate = D-glycero-alpha-D-manno-heptose 7-phosphate + D-glycero-beta-D-manno-heptose 7-phosphate. It participates in carbohydrate biosynthesis; D-glycero-D-manno-heptose 7-phosphate biosynthesis; D-glycero-alpha-D-manno-heptose 7-phosphate and D-glycero-beta-D-manno-heptose 7-phosphate from sedoheptulose 7-phosphate: step 1/1. Its function is as follows. Catalyzes the isomerization of sedoheptulose 7-phosphate in D-glycero-D-manno-heptose 7-phosphate. The protein is Phosphoheptose isomerase of Pseudomonas putida (strain GB-1).